The sequence spans 633 residues: Extracellular metalloproteinase mep (633 aa).

The N-terminal stretch at 1 to 18 is a signal peptide; that stretch reads MRLLSLAGAMALPLCVLA. Residues 19 to 244 constitute a propeptide that is removed on maturation; sequence HPTHRTRGIA…IHGVVDYISD (226 aa). Asparagine 326 carries an N-linked (GlcNAc...) asparagine glycan. Histidine 428 provides a ligand contact to Zn(2+). Glutamate 429 is an active-site residue. Histidine 432 is a binding site for Zn(2+). An N-linked (GlcNAc...) asparagine glycan is attached at asparagine 514.

The protein belongs to the peptidase M36 family. It depends on Zn(2+) as a cofactor.

Its subcellular location is the secreted. Functionally, secreted metalloproteinase that allows assimilation of proteinaceous substrates. This chain is Extracellular metalloproteinase mep (mep), found in Aspergillus terreus (strain NIH 2624 / FGSC A1156).